The following is a 424-amino-acid chain: UDP-N-acetylglucosamine 1-carboxyvinyltransferase (424 aa).

A phosphoenolpyruvate-binding site is contributed by 22-23; it reads KN. Residue arginine 93 participates in UDP-N-acetyl-alpha-D-glucosamine binding. Cysteine 117 serves as the catalytic Proton donor. A 2-(S-cysteinyl)pyruvic acid O-phosphothioketal modification is found at cysteine 117. Residues 122–126, aspartate 307, and valine 329 each bind UDP-N-acetyl-alpha-D-glucosamine; that span reads RPIDL.

This sequence belongs to the EPSP synthase family. MurA subfamily.

The protein resides in the cytoplasm. The enzyme catalyses phosphoenolpyruvate + UDP-N-acetyl-alpha-D-glucosamine = UDP-N-acetyl-3-O-(1-carboxyvinyl)-alpha-D-glucosamine + phosphate. Its pathway is cell wall biogenesis; peptidoglycan biosynthesis. Functionally, cell wall formation. Adds enolpyruvyl to UDP-N-acetylglucosamine. The protein is UDP-N-acetylglucosamine 1-carboxyvinyltransferase of Pelodictyon phaeoclathratiforme (strain DSM 5477 / BU-1).